We begin with the raw amino-acid sequence, 78 residues long: Conotoxin Cl11.1 (78 aa).

Residues 1-19 (MKLALTFLLILMILPLTTG) form the signal peptide. The propeptide occupies 20-33 (GKKSDNQALKRLGA). 4 cysteine pairs are disulfide-bonded: C47/C61, C54/C66, C60/C70, and C65/C77.

The protein belongs to the conotoxin I1 superfamily. Expressed by the venom duct.

It localises to the secreted. The protein is Conotoxin Cl11.1 of Californiconus californicus (California cone).